The sequence spans 48 residues: Delta-stichotoxin-Hcr1b (48 aa).

3 disulfide bridges follow: C3/C43, C5/C33, and C26/C44.

It belongs to the sea anemone sodium channel inhibitory toxin family. Type II subfamily.

It localises to the secreted. The protein localises to the nematocyst. In terms of biological role, binds to site 3 of voltage-gated sodium channels and inhibits the inactivation process. The protein is Delta-stichotoxin-Hcr1b of Radianthus crispa (Leathery sea anemone).